The chain runs to 378 residues: Chitinase (378 aa).

A signal peptide spans 1-28 (MNFTVKYSFLVICLLCCLLSTYVSVIEG). The GH18 domain maps to 53-378 (GIIQGYYPSW…AIEYFVESLH (326 aa)). Residue Glu-174 is the Proton donor of the active site. The cysteines at positions 220 and 230 are disulfide-linked.

Belongs to the glycosyl hydrolase 18 family. Forms a hetero-multimeric, high molecular weight complex composed of at least CHT1, SOAP AND WARP. Within the complex, may interact with WARP via a disulfide bond.

It is found in the secreted. It localises to the cytoplasmic vesicle. The protein resides in the secretory vesicle. Its subcellular location is the microneme. It catalyses the reaction Random endo-hydrolysis of N-acetyl-beta-D-glucosaminide (1-&gt;4)-beta-linkages in chitin and chitodextrins.. With respect to regulation, inhibited by allosamidin. Functionally, endochitinase that cleaves beta-1,4-linkages between tri- and tetramers of N-acetylglucosamine (GlcNAc) from penta- and hexameric chitin oligomers. Does not cleave smaller chitin oligosaccharides. Required to cross the acellular, chitin-containing peritrophic matrix (PM) which is formed around the ingested blood meal in the mosquito midgut allowing the ookinete to invade the mosquito gut epithelium. The polypeptide is Chitinase (Plasmodium falciparum (isolate 3D7)).